Reading from the N-terminus, the 130-residue chain is Small ribosomal subunit protein uS11 (130 aa).

The protein belongs to the universal ribosomal protein uS11 family. Part of the 30S ribosomal subunit.

Its function is as follows. Located on the platform of the 30S subunit. The protein is Small ribosomal subunit protein uS11 of Nanoarchaeum equitans (strain Kin4-M).